The chain runs to 326 residues: 3-oxopimeloyl-[acyl-carrier-protein] synthase (326 aa).

Catalysis depends on residues C115 and H253. An ACP-binding region spans residues 254–258; that stretch reads QANIR. N283 is an active-site residue.

It belongs to the thiolase-like superfamily. BioZ family.

It carries out the reaction malonyl-[ACP] + an acyl-CoA + H(+) = a 3-oxoacyl-[ACP] + CO2 + CoA. The enzyme catalyses glutaryl-CoA + malonyl-[ACP] + H(+) = 3-oxo-6-carboxyhexanoyl-[ACP] + CO2 + CoA. The protein operates within cofactor biosynthesis; biotin biosynthesis. Involved in the formation of the biotin precursor pimeloyl-ACP. Catalyzes the condensation of glutaryl-CoA, an intermediate in lysine degradation, with malonyl-ACP to produce 3-oxopimeloyl-ACP. The protein is 3-oxopimeloyl-[acyl-carrier-protein] synthase of Brucella abortus (strain 2308).